We begin with the raw amino-acid sequence, 110 residues long: Iron-sulfur cluster assembly protein CyaY (110 aa).

Belongs to the frataxin family.

Its function is as follows. Involved in iron-sulfur (Fe-S) cluster assembly. May act as a regulator of Fe-S biogenesis. This is Iron-sulfur cluster assembly protein CyaY from Pseudomonas putida (strain ATCC 700007 / DSM 6899 / JCM 31910 / BCRC 17059 / LMG 24140 / F1).